The sequence spans 208 residues: Translation initiation factor IF-3 (208 aa).

It belongs to the IF-3 family. Monomer.

It localises to the cytoplasm. Its function is as follows. IF-3 binds to the 30S ribosomal subunit and shifts the equilibrium between 70S ribosomes and their 50S and 30S subunits in favor of the free subunits, thus enhancing the availability of 30S subunits on which protein synthesis initiation begins. The polypeptide is Translation initiation factor IF-3 (Parabacteroides distasonis (strain ATCC 8503 / DSM 20701 / CIP 104284 / JCM 5825 / NCTC 11152)).